Consider the following 105-residue polypeptide: Large ribosomal subunit protein uL24 (105 aa).

The protein belongs to the universal ribosomal protein uL24 family. In terms of assembly, part of the 50S ribosomal subunit.

In terms of biological role, one of two assembly initiator proteins, it binds directly to the 5'-end of the 23S rRNA, where it nucleates assembly of the 50S subunit. Its function is as follows. One of the proteins that surrounds the polypeptide exit tunnel on the outside of the subunit. The chain is Large ribosomal subunit protein uL24 from Hahella chejuensis (strain KCTC 2396).